The sequence spans 775 residues: Homeobox protein SIX4 (775 aa).

Residues 1–10 are compositionally biased toward polar residues; sequence MSSSSPTGQI. Disordered regions lie at residues 1-76 and 263-313; these read MSSS…AGAA and WFKN…DGVT. Position 2 is an N-acetylserine (serine 2). The span at 54–63 shows a compositional bias: low complexity; that stretch reads EPGDAAAASR. Positions 216–275 form a DNA-binding region, homeobox; the sequence is GEETVYCFKEKSRNALKELYKQNRYPSPAEKRHLAKITGLSLTQVSNWFKNRRQRDRNPS. 2 stretches are compositionally biased toward basic and acidic residues: residues 271 to 283 and 292 to 301; these read DRNP…KSES and ESSKGHEDLS. Residues 582–775 are transactivation domain; it reads AQVNASLSSE…VQLDEDMQDL (194 aa). Serine 634 is subject to Phosphoserine.

This sequence belongs to the SIX/Sine oculis homeobox family. In terms of assembly, interacts with EYA3; acts cooperatively with EYA3 to transactivate target genes through interaction and nuclear translocation of EYA3 protein. Mainly expressed in the skeletal muscle (isoform 1 and isoform 2 but not isoform 3), and weakly in the heart. Also found in the retina and the distal tube of kidney. Expressed in skeletal muscle, nasal epithelium, cochlea, parathyroid and salivary gland. Expressed in muscle satellite cells of normal and regenerating muscles.

The protein localises to the nucleus. Its subcellular location is the cytoplasm. In terms of biological role, transcriptional regulator which can act as both a transcriptional repressor and activator by binding a DNA sequence on these target genes and is involved in processes like cell differentiation, cell migration and cell survival. Transactivates gene expression by binding a 5'-[CAT]A[CT][CT][CTG]GA[GAT]-3' motif present in the Trex site and from a 5'-TCA[AG][AG]TTNC-3' motif present in the MEF3 site of the muscle-specific genes enhancer. Acts cooperatively with EYA proteins to transactivate their target genes through interaction and nuclear translocation of EYA protein. Acts synergistically with SIX1 to regulate target genes involved in formation of various organs, including muscle, kidney, gonad, ganglia, olfactory epithelium and cranial skeleton. Plays a role in several important steps of muscle development. Controls the genesis of hypaxial myogenic progenitors in the dermomyotome by transactivating PAX3 and the delamination and migration of the hypaxial precursors from the ventral lip to the limb buds through the transactivation of PAX3, MET and LBX1. Controls myoblast determination by transactivating MYF5, MYOD1 and MYF6. Controls somitic differentiation in myocyte through MYOG transactivation. Plays a role in synaptogenesis and sarcomere organization by participating in myofiber specialization during embryogenesis by activating fast muscle program in the primary myotome resulting in an up-regulation of fast muscle genes, including ATP2A1, MYL1 and TNNT3. Simultaneously, is also able to activate inhibitors of slow muscle genes, such as SOX6, HRASLS, and HDAC4, thereby restricting the activation of the slow muscle genes. During muscle regeneration, negatively regulates differentiation of muscle satellite cells through down-regulation of MYOG expression. During kidney development regulates the early stages of metanephros development and ureteric bud formation through regulation of GDNF, SALL1, PAX8 and PAX2 expression. Plays a role in gonad development by regulating both testis determination and size determination. In gonadal sex determination, transactivates ZFPM2 by binding a MEF3 consensus sequence, resulting in SRY up-regulation. In gonadal size determination, transactivates NR5A1 by binding a MEF3 consensus sequence resulting in gonadal precursor cell formation regulation. During olfactory development mediates the specification and patterning of olfactory placode through fibroblast growth factor and BMP4 signaling pathways and also regulates epithelial cell proliferation during placode formation. Promotes survival of sensory neurons during early trigeminal gangliogenesis. In the developing dorsal root ganglia, up-regulates SLC12A2 transcription. Regulates early thymus/parathyroid organogenesis through regulation of GCM2 and FOXN1 expression. Forms gustatory papillae during development of the tongue. Also plays a role during embryonic cranial skeleton morphogenesis. This Mus musculus (Mouse) protein is Homeobox protein SIX4 (Six4).